A 270-amino-acid polypeptide reads, in one-letter code: MNERPILFFDSGIGGLTVLREVRVLIPETQFIYVADDAGFPYGNWEENVLKNHILKVFTNLLTLYNPTLCVVACNTVSTLMMADLRKEFPHTLFVGTVPAIKLAAKQTKSGFISVLATPGTVKRAYTRELINSFAGQCHVQLVGSEKLAAFAEDYLRGKPIDLEELRNEILPCFFEQNGKYTDTIVLACTHYPFLINLFREQALWPVKWIDPAKAIAKHIRSLLPERMYHKNTKKLKDFALFTSQNITSSTKHLLKEFGLNITKGVDFEM.

Substrate is bound by residues 10–11 (DS) and 42–43 (YG). C74 serves as the catalytic Proton donor/acceptor. 75-76 (NT) contacts substrate. The Proton donor/acceptor role is filled by C189. 190 to 191 (TH) serves as a coordination point for substrate.

Belongs to the aspartate/glutamate racemases family.

It carries out the reaction L-glutamate = D-glutamate. The protein operates within cell wall biogenesis; peptidoglycan biosynthesis. Functionally, provides the (R)-glutamate required for cell wall biosynthesis. The chain is Glutamate racemase from Bartonella quintana (strain Toulouse) (Rochalimaea quintana).